We begin with the raw amino-acid sequence, 276 residues long: Diaminopimelate epimerase (276 aa).

Positions 13, 46, and 66 each coordinate substrate. Residue cysteine 75 is the Proton donor of the active site. Substrate contacts are provided by residues glycine 76–asparagine 77, asparagine 159, asparagine 192, and glutamate 210–arginine 211. Cysteine 219 serves as the catalytic Proton acceptor. Glycine 220–threonine 221 is a binding site for substrate.

It belongs to the diaminopimelate epimerase family. Homodimer.

The protein localises to the cytoplasm. The enzyme catalyses (2S,6S)-2,6-diaminopimelate = meso-2,6-diaminopimelate. The protein operates within amino-acid biosynthesis; L-lysine biosynthesis via DAP pathway; DL-2,6-diaminopimelate from LL-2,6-diaminopimelate: step 1/1. Catalyzes the stereoinversion of LL-2,6-diaminopimelate (L,L-DAP) to meso-diaminopimelate (meso-DAP), a precursor of L-lysine and an essential component of the bacterial peptidoglycan. The polypeptide is Diaminopimelate epimerase (Pseudomonas aeruginosa (strain LESB58)).